We begin with the raw amino-acid sequence, 1037 residues long: PH and SEC7 domain-containing protein 3 (1037 aa).

The interval 37-70 (EEKTPDSSDHGGSTLLPPTVTNEFPEYGTMEEGG) is disordered. At serine 76 the chain carries Phosphoserine. 5 disordered regions span residues 169–189 (TASHKPQRAHRTFPVGPGKSP), 236–255 (RVPESACPVSSSSAGSHNPV), 262–284 (REQRSDLGREHPRGYDRGGSMGR), 304–335 (EAESRHPPERTASPVSKEFAKRPSHSSPACGV), and 353–375 (APSERPGTSAGTLSPMPLGESGE). The span at 237-251 (VPESACPVSSSSAGS) shows a compositional bias: low complexity. Basic and acidic residues predominate over residues 262-277 (REQRSDLGREHPRGYD). One can recognise an SEC7 domain in the interval 515–723 (NSVYTRGPQE…KALYNSIKNE (209 aa)). Basic and acidic residues predominate over residues 730-747 (DDEEKKKSPSEGTDEKAN). The interval 730-762 (DDEEKKKSPSEGTDEKANGTHPKTISRIGSTTN) is disordered. Residues 750–762 (HPKTISRIGSTTN) are compositionally biased toward polar residues. Serine 759 is subject to Phosphoserine. Positions 774 to 887 (AVYKSGFLAR…WINKINCVAA (114 aa)) constitute a PH domain. Residues 911–941 (ATTTKLSQEEQLKSHESKLKQITTELAEHRS) are a coiled coil. A disordered region spans residues 984–1037 (LLTTDGNEPVGLKKSHSSPSLNPDASPVTAKVKRNVSERKDHRPETPGIKQKVT). A phosphoserine mark is found at serine 998, serine 1000, serine 1001, serine 1003, and serine 1009. Residues 1018–1028 (NVSERKDHRPE) are compositionally biased toward basic and acidic residues.

In terms of tissue distribution, ubiquitously expressed, with highest levels in liver. Present in brain, with highest levels in olfactory bulb, cortex, hippocampal pyramidal cell layer and cerebellar granule cell layer (at protein level).

It localises to the cell membrane. It is found in the cell projection. The protein resides in the ruffle membrane. The protein localises to the postsynaptic density. In terms of biological role, guanine nucleotide exchange factor for ARF6. The sequence is that of PH and SEC7 domain-containing protein 3 (Psd3) from Mus musculus (Mouse).